A 703-amino-acid chain; its full sequence is 1,4-alpha-glucan-branching enzyme (703 aa).

The (1,4-alpha-D-glucosyl)n site is built by tryptophan 93 and lysine 130. The active-site Nucleophile is aspartate 355. The active-site Proton donor is the glutamate 415.

Belongs to the glycosyl hydrolase 13 family. GlgB subfamily.

Its subcellular location is the cytoplasm. It catalyses the reaction Transfers a segment of a (1-&gt;4)-alpha-D-glucan chain to a primary hydroxy group in a similar glucan chain.. It participates in glycan biosynthesis; glycogen biosynthesis. Its function is as follows. Glycogen-branching enzyme participates in the glycogen biosynthetic process along with glycogenin and glycogen synthase. Generates alpha-1,6-glucosidic branches from alpha-1,4-linked glucose chains, to increase solubility of the glycogen polymer. This chain is 1,4-alpha-glucan-branching enzyme (GLC3), found in Eremothecium gossypii (strain ATCC 10895 / CBS 109.51 / FGSC 9923 / NRRL Y-1056) (Yeast).